Reading from the N-terminus, the 520-residue chain is GMP synthase [glutamine-hydrolyzing] (520 aa).

A Glutamine amidotransferase type-1 domain is found at serine 9–aspartate 202. The Nucleophile role is filled by cysteine 86. Catalysis depends on residues histidine 176 and glutamate 178. The region spanning tryptophan 203–arginine 395 is the GMPS ATP-PPase domain. Serine 230–serine 236 provides a ligand contact to ATP.

As to quaternary structure, homodimer.

It carries out the reaction XMP + L-glutamine + ATP + H2O = GMP + L-glutamate + AMP + diphosphate + 2 H(+). The protein operates within purine metabolism; GMP biosynthesis; GMP from XMP (L-Gln route): step 1/1. Functionally, catalyzes the synthesis of GMP from XMP. The protein is GMP synthase [glutamine-hydrolyzing] of Rhizobium etli (strain CIAT 652).